The chain runs to 156 residues: Cyanate hydratase (156 aa).

Residues arginine 96, glutamate 99, and serine 122 contribute to the active site.

Belongs to the cyanase family.

The enzyme catalyses cyanate + hydrogencarbonate + 3 H(+) = NH4(+) + 2 CO2. Functionally, catalyzes the reaction of cyanate with bicarbonate to produce ammonia and carbon dioxide. The protein is Cyanate hydratase of Pseudomonas paraeruginosa (strain DSM 24068 / PA7) (Pseudomonas aeruginosa (strain PA7)).